The sequence spans 315 residues: tRNA dimethylallyltransferase (315 aa).

ATP is bound at residue 13 to 20 (GPTASGKS). Substrate is bound at residue 15-20 (TASGKS). Interaction with substrate tRNA stretches follow at residues 38–41 (DSMQ) and 162–166 (QRLAR).

This sequence belongs to the IPP transferase family. In terms of assembly, monomer. Mg(2+) is required as a cofactor.

The catalysed reaction is adenosine(37) in tRNA + dimethylallyl diphosphate = N(6)-dimethylallyladenosine(37) in tRNA + diphosphate. Its function is as follows. Catalyzes the transfer of a dimethylallyl group onto the adenine at position 37 in tRNAs that read codons beginning with uridine, leading to the formation of N6-(dimethylallyl)adenosine (i(6)A). The chain is tRNA dimethylallyltransferase from Paramagnetospirillum magneticum (strain ATCC 700264 / AMB-1) (Magnetospirillum magneticum).